Reading from the N-terminus, the 184-residue chain is Inactive ribonuclease-like protein 9 (184 aa).

The N-terminal stretch at 1–25 is a signal peptide; that stretch reads MKPLVIKFAWPLPLLLLLLLPPKLQ. 3 disulfide bridges follow: Cys93-Cys148, Cys111-Cys163, and Cys118-Cys125. N-linked (GlcNAc...) asparagine glycosylation is found at Asn147 and Asn179.

The protein belongs to the pancreatic ribonuclease family.

The protein resides in the secreted. Functionally, does not exhibit any ribonuclease activity. This Mus musculus (Mouse) protein is Inactive ribonuclease-like protein 9 (Rnase9).